Consider the following 120-residue polypeptide: Large ribosomal subunit protein bL20 (120 aa).

Belongs to the bacterial ribosomal protein bL20 family.

In terms of biological role, binds directly to 23S ribosomal RNA and is necessary for the in vitro assembly process of the 50S ribosomal subunit. It is not involved in the protein synthesizing functions of that subunit. In Ligilactobacillus salivarius (strain UCC118) (Lactobacillus salivarius), this protein is Large ribosomal subunit protein bL20.